Here is a 392-residue protein sequence, read N- to C-terminus: Selenide, water dikinase 1 (392 aa).

Cysteine 31 is a catalytic residue. Residues lysine 32, 67–69, aspartate 87, aspartate 110, and 161–164 each bind ATP; these read GMD and GGQT. A Mg(2+)-binding site is contributed by aspartate 69. Aspartate 110 lines the Mg(2+) pocket. Aspartate 265 is a binding site for Mg(2+). Position 387 is a phosphothreonine (threonine 387).

It belongs to the selenophosphate synthase 1 family. Class II subfamily. As to quaternary structure, homodimer. It depends on Mg(2+) as a cofactor.

The protein localises to the cell membrane. The protein resides in the nucleus membrane. The enzyme catalyses hydrogenselenide + ATP + H2O = selenophosphate + AMP + phosphate + 2 H(+). In terms of biological role, synthesizes selenophosphate from selenide and ATP. The sequence is that of Selenide, water dikinase 1 (sephs1) from Danio rerio (Zebrafish).